We begin with the raw amino-acid sequence, 109 residues long: Parvalbumin beta (109 aa).

The residue at position 2 (Ala-2) is an N-acetylalanine. 2 EF-hand domains span residues 39–74 (KSAD…FKAG) and 78–109 (LSDA…MIKG). Ca(2+) contacts are provided by Asp-52, Asp-54, Ser-56, Tyr-58, Glu-60, Glu-63, Asp-91, Asp-93, Asp-95, Lys-97, and Glu-102.

Belongs to the parvalbumin family. In terms of processing, the N-terminus is blocked.

Functionally, in muscle, parvalbumin is thought to be involved in relaxation after contraction. It binds two calcium ions. This Scomber scombrus (Atlantic mackerel) protein is Parvalbumin beta.